The chain runs to 117 residues: Large ribosomal subunit protein bL20 (117 aa).

It belongs to the bacterial ribosomal protein bL20 family.

Binds directly to 23S ribosomal RNA and is necessary for the in vitro assembly process of the 50S ribosomal subunit. It is not involved in the protein synthesizing functions of that subunit. The protein is Large ribosomal subunit protein bL20 of Campylobacter hominis (strain ATCC BAA-381 / DSM 21671 / CCUG 45161 / LMG 19568 / NCTC 13146 / CH001A).